Reading from the N-terminus, the 1383-residue chain is MDEGVNLVFHKKVIDGTAIKRLISRLIDHFGMAHTSHILDQVKTLGFQQATATSISLGIDDLLTIPSKGWLVQDAEQQSLSLEKHHHYGNVHAVEKLRQSIEVWYATSEYLRQEMNPNFRMTDPFNPVHIMSFSGARGNASQVHQLVGMRGLMSDPQGQMIDLPIQSNLREGLSLTEYIISCYGARKGVVDTAVRTSDAGYLTRRLVEVVQHIVVRRTDCGTLRGISVSPRRMPERIFIQTLIGRVLADDIYIGSRCIAIRNQDIGIGLVNRFITFRIQPISIRTPFTCRSTSWICRLCYGRSPTHGDLVELGEAVGIIAGQSIGEPGTQLTLRTFHTGGVFTGGTAEHVRAPSNGKIKFNFNEALVHPARTRHGHPALLCSMDLDVTIESEDILHNLTIPPKSFLLVQNNQYVESEQVIAEICAGTSTFHFKERVRKHIYSDSEGEMHWSTDVYHAPEFTYSNVHLLPKTSHLWILSGGSCRSRGAPFSLHKDQDQMNPRSTERERRYLSSLSANNDQIRYKFFSSSFSGKKKDDRSPGYSEMNRIICTLPCNLIYPSILRENSDLLAKRRRNRLVIPVQSSQEREKELIPHSGISIELPINGIFRKKSILAFFDDPRYRTKSSGITQYETMGMHSIVKKEGLVDYRGINEFKPKYQMTIDRFFFIPEEVHILPESSSIMVRNNSLIGVDTRIALNTRSRAGGLVRVERKKRGIALQIFSGTIHFPGETDKISWDSGILIPPGTGKRNSKESKKWKNGIYVQRITPTKKKHFVLFRPVVTYEIADGLNLARLFPPDLCQEKDNMQLQIVNYIVYGNGKPIREISDTSIQLVRTWFILNWDQDKKSASAEAAHASFVEVRAKGLIRDFLRIDLVKSPILDPRKRNDPSGSGLISDNVSDHTNINPFYSKPKMKQSPRQNHGTIRTLLNQNKECPSLMILSASNCFRMGPFNDVKSQNVIKESIKKDAIIQIRNSIGPLGTALQVVNFDSFYYFITHNQVLLTKYLQVENLKQTFQVLQYYLMDESGRIYNPDPRSNIVLNSFNLSWYFLPHNNYENSCEEISTIVSLGQFICENGCIAKNGPYLRSGQVLIVQLDSVVIRSAKPYLATPGATVHGHYGEILYDGDTVVTFLYEKSRSGDITQGLPKVEQVLEVRSVDSISVNLEKRVENWNEHITRILGFPWGFLIGAELTIVQSRISLVNKIQKVYRSQGVQIHNRHIEIIVRQITSKVLVSEDGMSNVFLPRELIGLLRAERTGRALEESICYKAFLLGITRTSLNTQSFISEASFQETARVLAKAALRGRIDWLKGLKENVVIGGMIPVGTGFKGLVHCSKQHKSIPKNKHFFEGEIRDILFHHRELFDSCISKNFHDTPEQSFRVFNDS.

Positions 220, 289, 296, and 299 each coordinate Zn(2+).

This sequence belongs to the RNA polymerase beta' chain family. RpoC2 subfamily. As to quaternary structure, in plastids the minimal PEP RNA polymerase catalytic core is composed of four subunits: alpha, beta, beta', and beta''. When a (nuclear-encoded) sigma factor is associated with the core the holoenzyme is formed, which can initiate transcription. Requires Zn(2+) as cofactor.

The protein localises to the plastid. The protein resides in the chloroplast. The catalysed reaction is RNA(n) + a ribonucleoside 5'-triphosphate = RNA(n+1) + diphosphate. In terms of biological role, DNA-dependent RNA polymerase catalyzes the transcription of DNA into RNA using the four ribonucleoside triphosphates as substrates. The sequence is that of DNA-directed RNA polymerase subunit beta'' from Oenothera parviflora (Small-flowered evening primrose).